Here is a 108-residue protein sequence, read N- to C-terminus: uncharacterized protein (108 aa).

This is an uncharacterized protein from Archaeoglobus fulgidus (strain ATCC 49558 / DSM 4304 / JCM 9628 / NBRC 100126 / VC-16).